The primary structure comprises 476 residues: Protein THYLAKOID RHODANESE-LIKE, chloroplastic (476 aa).

The transit peptide at Met-1–Arg-21 directs the protein to the chloroplast. The disordered stretch occupies residues Met-1–Ala-29. Residues Ala-11 to Arg-21 show a composition bias toward low complexity. The transit peptide at Ala-22–Pro-58 directs the protein to the thylakoid. A helical membrane pass occupies residues Leu-100–Gly-120. Residues Glu-140–Ala-246 form the Rhodanese domain. The next 2 membrane-spanning stretches (helical) occupy residues Leu-264 to Ile-284 and Val-287 to Ala-307. The interval Leu-342–Pro-476 is disordered. A compositionally biased stretch (low complexity) spans Pro-351–Ala-389. Pro residues predominate over residues Leu-403–Leu-412. Over residues Glu-425–Glu-446 the composition is skewed to low complexity. The span at Ala-447–Pro-476 shows a compositional bias: pro residues.

In terms of assembly, component of high molecular weight thylakoid LFNRs-containing protein complexes containing LIR1, LFNR1, LFNR2, TIC62 and TROL proteins.

The protein resides in the plastid. It localises to the chloroplast thylakoid membrane. Rhodanese domain-containing protein required for anchoring ferredoxin--NADP reductase to the thylakoid membranes and sustaining efficient linear electron flow (LEF). The polypeptide is Protein THYLAKOID RHODANESE-LIKE, chloroplastic (Oryza sativa subsp. indica (Rice)).